Consider the following 422-residue polypeptide: Enolase (422 aa).

Residue Gln-162 coordinates (2R)-2-phosphoglycerate. Glu-204 acts as the Proton donor in catalysis. Positions 241, 285, and 312 each coordinate Mg(2+). 4 residues coordinate (2R)-2-phosphoglycerate: Lys-337, Arg-366, Ser-367, and Lys-388. Lys-337 serves as the catalytic Proton acceptor.

The protein belongs to the enolase family. Mg(2+) serves as cofactor.

Its subcellular location is the cytoplasm. It localises to the secreted. The protein resides in the cell surface. It catalyses the reaction (2R)-2-phosphoglycerate = phosphoenolpyruvate + H2O. It functions in the pathway carbohydrate degradation; glycolysis; pyruvate from D-glyceraldehyde 3-phosphate: step 4/5. In terms of biological role, catalyzes the reversible conversion of 2-phosphoglycerate (2-PG) into phosphoenolpyruvate (PEP). It is essential for the degradation of carbohydrates via glycolysis. This is Enolase from Wolinella succinogenes (strain ATCC 29543 / DSM 1740 / CCUG 13145 / JCM 31913 / LMG 7466 / NCTC 11488 / FDC 602W) (Vibrio succinogenes).